A 105-amino-acid chain; its full sequence is NADH-quinone oxidoreductase subunit K (105 aa).

Helical transmembrane passes span 9–29 (PNYYLVLAAVLFTIGAAGVLV), 34–54 (IVLFMCVELMLNAANLTLVTF), and 65–85 (IMAFFVMVVAAAEVVVGLAII).

It belongs to the complex I subunit 4L family. In terms of assembly, NDH-1 is composed of 14 different subunits. Subunits NuoA, H, J, K, L, M, N constitute the membrane sector of the complex.

The protein resides in the cell membrane. The catalysed reaction is a quinone + NADH + 5 H(+)(in) = a quinol + NAD(+) + 4 H(+)(out). In terms of biological role, NDH-1 shuttles electrons from NADH, via FMN and iron-sulfur (Fe-S) centers, to quinones in the respiratory chain. The immediate electron acceptor for the enzyme in this species is believed to be a menaquinone. Couples the redox reaction to proton translocation (for every two electrons transferred, four hydrogen ions are translocated across the cytoplasmic membrane), and thus conserves the redox energy in a proton gradient. This Salinispora tropica (strain ATCC BAA-916 / DSM 44818 / JCM 13857 / NBRC 105044 / CNB-440) protein is NADH-quinone oxidoreductase subunit K.